Reading from the N-terminus, the 251-residue chain is 2-amino-5-chloromuconate deaminase (251 aa).

As to quaternary structure, monomer.

It catalyses the reaction (2Z,4E)-2-aminomuconate + H2O = (2Z,4E)-2-hydroxyhexa-2,4-dienedioate + NH4(+). Its pathway is xenobiotic degradation; 4-chloronitrobenzene degradation. It functions in the pathway xenobiotic degradation; nitrobenzene degradation. With respect to regulation, cysteine residue modifying agents such as p-chloromercuribenzoate and the SH-binding metals Zn(2+), Ni(2+) and Cu(2+) completely inhibit deaminase activity, whereas Ca(2+), Mg(2+) and the histidine residue-modifying agent diethyl pyrocarbonate inhibit the activity by 23 to 50%. In terms of biological role, involved in the biodegradation of xenobiotic compounds, such as nitrobenzene and 4-chloronitrobenzene (4-CNB). CnbZ preferentially catalyzes the deamination of 2-amino-5-chloromuconate (2A5CM) to yield 2-hydroxy-5-chloromuconate (2H5CM). Also able to catalyze the deamination of 2-aminomuconate to yield 2-hydroxymuconate, which spontaneously converts into its keto form, 2-oxalocrotonate. The chain is 2-amino-5-chloromuconate deaminase from Comamonas testosteroni (Pseudomonas testosteroni).